The following is a 121-amino-acid chain: MGRIFLEHLGGLKLFNCAQCHTNLTNRSQLISTRFTGATGRAYLFKRVVNLTFSNIQERVMLTGRHMVRDVMCKNCGAKLGWMYEFATEESQKYKEGRVILEYALITEAEGFPSEAATTSH.

A Yippee domain is found at 13-110; the sequence is KLFNCAQCHT…LEYALITEAE (98 aa). Zn(2+) is bound by residues C17, C20, C73, and C76.

It belongs to the yippee family. Interacts with hemolin.

The chain is Protein yippee from Drosophila melanogaster (Fruit fly).